The sequence spans 283 residues: Non-selective voltage-gated ion channel VDAC3 (283 aa).

Residue C2 is modified to N-acetylcysteine. At T4 the chain carries Phosphothreonine. K12, K15, and K20 each carry N6-acetyllysine. 2 beta stranded membrane passes run 26-35 and 39-47; these read MVKIDLKTKS and VEFSTSGHA. K53 participates in a covalent cross-link: Glycyl lysine isopeptide (Lys-Gly) (interchain with G-Cter in ubiquitin). 3 beta stranded membrane-spanning segments follow: residues 54–64, 69–76, and 80–89; these read ASGNLETKYKV, LTFTQKWN, and TLGTEISWEN. K90 is subject to N6-acetyllysine. Residues 95–104 form a beta stranded membrane-spanning segment; the sequence is LKLTLDTIFV. Glycyl lysine isopeptide (Lys-Gly) (interchain with G-Cter in ubiquitin) cross-links involve residues K109 and K110. 10 beta stranded membrane passes run 111-120, 123-130, 137-145, 150-158, 163-175, 178-185, 189-198, 202-211, 218-227, and 231-238; these read SGKLKASYRR, FSLGSNVD, TIYGWAVLA, LAGYQMSFD, KLSQ…GYKA, FQLHTHVN, EFGGSIYQKV, IETSINLAWT, RFGIAAKYKL, and TSLSAKVN. S241 carries the post-translational modification Phosphoserine. NAD(+)-binding positions include 242–244 and 260–264; these read LIG and SALID. 2 beta stranded membrane-spanning segments follow: residues 242 to 251 and 254 to 263; these read LIGLGYTQTL and GVKLTLSALI. K266 bears the N6-acetyllysine; alternate mark. Residue K266 forms a Glycyl lysine isopeptide (Lys-Gly) (interchain with G-Cter in ubiquitin); alternate linkage. The beta stranded transmembrane segment at 273–282 threads the bilayer; it reads HKVGLGFELE.

It belongs to the eukaryotic mitochondrial porin family. In terms of assembly, interacts with ARMC12 in a TBC1D21-dependent manner. Interacts with MISFA. Post-translationally, ubiquitinated by PRKN during mitophagy, leading to its degradation and enhancement of mitophagy. Deubiquitinated by USP30. Highest levels of expression detected in testis, less but still abundant expression in heart, kidney, brain, and skeletal muscle.

The protein resides in the mitochondrion outer membrane. Its subcellular location is the membrane. It catalyses the reaction chloride(in) = chloride(out). It carries out the reaction K(+)(in) = K(+)(out). Functionally, non-selective voltage-gated ion channel that mediates the transport of anions and cations through the mitochondrion outer membrane and plasma membrane. Forms a high-conducting channel with a stable open state and a voltage-induced closure with a mild preference for anions over cations. Involved in male fertility and sperm mitochondrial sheath formation. In Mus musculus (Mouse), this protein is Non-selective voltage-gated ion channel VDAC3.